The sequence spans 196 residues: NAD(P)H-quinone oxidoreductase subunit I (196 aa).

2 4Fe-4S ferredoxin-type domains span residues 54-83 (GRIH…VDWV) and 94-123 (KHYS…VTEE). [4Fe-4S] cluster contacts are provided by Cys63, Cys66, Cys69, Cys73, Cys103, Cys106, Cys109, and Cys113. The interval 174–196 (PAGAQRAGERPEAIANTAKSSEN) is disordered.

The protein belongs to the complex I 23 kDa subunit family. NDH-1 is composed of at least 11 different subunits. [4Fe-4S] cluster is required as a cofactor.

The protein localises to the cellular thylakoid membrane. The catalysed reaction is a plastoquinone + NADH + (n+1) H(+)(in) = a plastoquinol + NAD(+) + n H(+)(out). The enzyme catalyses a plastoquinone + NADPH + (n+1) H(+)(in) = a plastoquinol + NADP(+) + n H(+)(out). Functionally, NDH-1 shuttles electrons from an unknown electron donor, via FMN and iron-sulfur (Fe-S) centers, to quinones in the respiratory and/or the photosynthetic chain. The immediate electron acceptor for the enzyme in this species is believed to be plastoquinone. Couples the redox reaction to proton translocation, and thus conserves the redox energy in a proton gradient. This chain is NAD(P)H-quinone oxidoreductase subunit I, found in Thermosynechococcus vestitus (strain NIES-2133 / IAM M-273 / BP-1).